The following is a 201-amino-acid chain: Peptide deformylase (201 aa).

Fe cation-binding residues include Cys-121 and His-163. Glu-164 is an active-site residue. Position 167 (His-167) interacts with Fe cation.

The protein belongs to the polypeptide deformylase family. Requires Fe(2+) as cofactor.

It carries out the reaction N-terminal N-formyl-L-methionyl-[peptide] + H2O = N-terminal L-methionyl-[peptide] + formate. Removes the formyl group from the N-terminal Met of newly synthesized proteins. Requires at least a dipeptide for an efficient rate of reaction. N-terminal L-methionine is a prerequisite for activity but the enzyme has broad specificity at other positions. This chain is Peptide deformylase, found in Parasynechococcus marenigrum (strain WH8102).